A 709-amino-acid chain; its full sequence is Elongation factor G (709 aa).

The region spanning 8 to 297 is the tr-type G domain; that stretch reads ANTRNIGIMA…AVIDYLPSPL (290 aa). Residues 17 to 24, 81 to 85, and 135 to 138 contribute to the GTP site; these read AHVDAGKT, DTPGH, and NKMD.

Belongs to the TRAFAC class translation factor GTPase superfamily. Classic translation factor GTPase family. EF-G/EF-2 subfamily.

Its subcellular location is the cytoplasm. Functionally, catalyzes the GTP-dependent ribosomal translocation step during translation elongation. During this step, the ribosome changes from the pre-translocational (PRE) to the post-translocational (POST) state as the newly formed A-site-bound peptidyl-tRNA and P-site-bound deacylated tRNA move to the P and E sites, respectively. Catalyzes the coordinated movement of the two tRNA molecules, the mRNA and conformational changes in the ribosome. This is Elongation factor G from Lactococcus lactis subsp. lactis (strain IL1403) (Streptococcus lactis).